We begin with the raw amino-acid sequence, 228 residues long: Lipoprotein-releasing system ATP-binding protein LolD (228 aa).

The ABC transporter domain occupies 6 to 228 (IKCINLNKSY…ENNQIFNYES (223 aa)). Residue 42-49 (GKSGSGKT) participates in ATP binding.

It belongs to the ABC transporter superfamily. Lipoprotein translocase (TC 3.A.1.125) family.

The protein localises to the cell inner membrane. Its function is as follows. Usually LolD forms an ABC transporter complex with LolC and LolE involved in the translocation of lipoprotein, in an ATP-dependent manner. However, LolE is certainly not functional as it is frameshifted. The polypeptide is Lipoprotein-releasing system ATP-binding protein LolD (Buchnera aphidicola subsp. Acyrthosiphon pisum (strain APS) (Acyrthosiphon pisum symbiotic bacterium)).